The primary structure comprises 248 residues: DCN1-like protein 4 (248 aa).

Positions 1–35 (MPRGKRRAADTISDNMDHGQPKRARTSYTSIPTQQ) are disordered. The span at 26 to 35 (TSYTSIPTQQ) shows a compositional bias: polar residues. The DCUN1 domain maps to 47-235 (FSQKRCMAWF…MLDEFVEWLR (189 aa)).

It is found in the nucleus. Inhibits neddylation of cullin components of SCF-type E3 ubiquitin ligase complexes and thus regulates SCF-type complex activity. Essential for development. Function inhibits cell proliferation and cell growth. In Drosophila melanogaster (Fruit fly), this protein is DCN1-like protein 4.